The chain runs to 364 residues: MPKRPTPSRTLVHVQELHDAPLAPLTTFRLGGPATRLITATTDAEVIAAVREADDSGTPLLLIGGGSNLVIGDKGFAGTALRIATTGFGLDGTKVELAAGEVWTDAVARTVEAGLAGIECLAGIPGSAGATPIQNVGAYGQEVSSTITEVIAYDRKTHETVTIPNAECAFSYRHSRFKADPERYVVLRVRFELEDADGLSAPVKYAETARALGVEPGDRVPLAAARETVLGLRSGKGMVLDPEDHDTWSAGSFFTNPILTEAECAAFHARVRERLGADAVPPAYPAGDGRTKTSAAWLIDKSGFTKGYGSGPARISTKHTLALTNRGEATTEDLLALAREVVAGVRDAFGITLVNEPVTVGVEL.

The 167-residue stretch at 30–196 (LGGPATRLIT…LRVRFELEDA (167 aa)) folds into the FAD-binding PCMH-type domain. Arg-173 is a catalytic residue. Residue Ser-252 is the Proton donor of the active site. The active site involves Glu-356.

Belongs to the MurB family. FAD serves as cofactor.

It is found in the cytoplasm. It carries out the reaction UDP-N-acetyl-alpha-D-muramate + NADP(+) = UDP-N-acetyl-3-O-(1-carboxyvinyl)-alpha-D-glucosamine + NADPH + H(+). The protein operates within cell wall biogenesis; peptidoglycan biosynthesis. Cell wall formation. The sequence is that of UDP-N-acetylenolpyruvoylglucosamine reductase from Streptomyces avermitilis (strain ATCC 31267 / DSM 46492 / JCM 5070 / NBRC 14893 / NCIMB 12804 / NRRL 8165 / MA-4680).